Consider the following 517-residue polypeptide: Squalene epoxidase 6 (517 aa).

2 consecutive transmembrane segments (helical) span residues 3-23 and 45-65; these read FTHV…VFYL and AADV…YALA. FAD contacts are provided by residues 55–56, 75–76, R83, F88, R156, V172, D336, and M349; these read VG and ER. Residues 447–467 traverse the membrane as a helical segment; that stretch reads LVYHLCAITLSSIGQLLSPFP.

It belongs to the squalene monooxygenase family. FAD is required as a cofactor. As to expression, expressed in seedlings, leaves, stems, inflorescences and siliques.

The protein localises to the membrane. It catalyses the reaction squalene + reduced [NADPH--hemoprotein reductase] + O2 = (S)-2,3-epoxysqualene + oxidized [NADPH--hemoprotein reductase] + H2O + H(+). The protein operates within terpene metabolism; lanosterol biosynthesis; lanosterol from farnesyl diphosphate: step 2/3. Functionally, catalyzes the stereospecific oxidation of squalene to (S)-2,3-epoxysqualene, and is considered to be a rate-limiting enzyme in steroid biosynthesis. In Arabidopsis thaliana (Mouse-ear cress), this protein is Squalene epoxidase 6 (SQE6).